The following is a 155-amino-acid chain: 3-hydroxyacyl-[acyl-carrier-protein] dehydratase FabZ (155 aa).

Residue His58 is part of the active site.

The protein belongs to the thioester dehydratase family. FabZ subfamily.

Its subcellular location is the cytoplasm. The catalysed reaction is a (3R)-hydroxyacyl-[ACP] = a (2E)-enoyl-[ACP] + H2O. Functionally, involved in unsaturated fatty acids biosynthesis. Catalyzes the dehydration of short chain beta-hydroxyacyl-ACPs and long chain saturated and unsaturated beta-hydroxyacyl-ACPs. This Rhizobium johnstonii (strain DSM 114642 / LMG 32736 / 3841) (Rhizobium leguminosarum bv. viciae) protein is 3-hydroxyacyl-[acyl-carrier-protein] dehydratase FabZ.